The following is a 251-amino-acid chain: 3-deoxy-manno-octulosonate cytidylyltransferase (251 aa).

Belongs to the KdsB family.

It localises to the cytoplasm. The catalysed reaction is 3-deoxy-alpha-D-manno-oct-2-ulosonate + CTP = CMP-3-deoxy-beta-D-manno-octulosonate + diphosphate. Its pathway is nucleotide-sugar biosynthesis; CMP-3-deoxy-D-manno-octulosonate biosynthesis; CMP-3-deoxy-D-manno-octulosonate from 3-deoxy-D-manno-octulosonate and CTP: step 1/1. The protein operates within bacterial outer membrane biogenesis; lipopolysaccharide biosynthesis. Its function is as follows. Activates KDO (a required 8-carbon sugar) for incorporation into bacterial lipopolysaccharide in Gram-negative bacteria. This is 3-deoxy-manno-octulosonate cytidylyltransferase from Vibrio vulnificus (strain CMCP6).